The primary structure comprises 248 residues: MSGGGVIRGPAGNNDCRIYVGNLPPDIRTKDIEDVFYKYGAIRDIDLKNRRGGPPFAFVEFEDPRDAEDAVYGRDGYDYDGYRLRVEFPRSGRGTGRGGGGGGGGGAPRGRYGPPSRRSENRVVVSGLPPSGSWQDLKDHMREAGDVCYADVYRDGTGVVEFVRKEDMTYAVRKLDNTKFRSHEGETAYIRVKVDGPRSPSYGRSRSRSRSRSRSRSRSNSRSRSYSPRRSRGSPRYSPRHSRSRSRT.

Ser-2 is modified (N-acetylserine). At Ser-2 the chain carries Phosphoserine. An RRM 1 domain is found at 16–91; sequence CRIYVGNLPP…YRLRVEFPRS (76 aa). Lys-30 participates in a covalent cross-link: Glycyl lysine isopeptide (Lys-Gly) (interchain with G-Cter in SUMO2). An N6-acetyllysine; alternate modification is found at Lys-38. Lys-38 participates in a covalent cross-link: Glycyl lysine isopeptide (Lys-Gly) (interchain with G-Cter in SUMO2); alternate. The segment at 88–134 is disordered; the sequence is FPRSGRGTGRGGGGGGGGGAPRGRYGPPSRRSENRVVVSGLPPSGSW. Asymmetric dimethylarginine; alternate occurs at positions 93, 97, and 109. Arg-93, Arg-97, and Arg-109 each carry omega-N-methylarginine; alternate. Positions 93–108 are enriched in gly residues; it reads RGTGRGGGGGGGGGAP. Arg-111 is modified (omega-N-methylarginine). The RRM 2 domain maps to 121–195; the sequence is NRVVVSGLPP…ETAYIRVKVD (75 aa). A Phosphoserine modification is found at Ser-133. Lys-179 is modified (N6-acetyllysine). The interval 191-248 is disordered; that stretch reads RVKVDGPRSPSYGRSRSRSRSRSRSRSRSNSRSRSYSPRRSRGSPRYSPRHSRSRSRT. Residues 198-247 form an interaction with SAFB1 region; that stretch reads RSPSYGRSRSRSRSRSRSRSRSNSRSRSYSPRRSRGSPRYSPRHSRSRSR. 2 positions are modified to phosphoserine: Ser-199 and Ser-201. Residue Tyr-202 is modified to Phosphotyrosine. A phosphoserine mark is found at Ser-205, Ser-207, Ser-209, Ser-231, Ser-234, and Ser-238. Positions 205 to 248 are enriched in basic residues; that stretch reads SRSRSRSRSRSRSRSNSRSRSYSPRRSRGSPRYSPRHSRSRSRT.

It belongs to the splicing factor SR family. Consists of two polypeptides of p32 and p33. Identified in the spliceosome C complex. Component of a ribonucleoprotein complex containing mRNAs and RNA-binding proteins including DDX5, HNRNPH2 and SRSF1 as well as splicing regulator ARVCF. In vitro, self-associates and binds SRSF2, SNRNP70 and U2AF1 but not U2AF2. Binds SREK1/SFRS12. Interacts with SAFB/SAFB1. Interacts with PSIP1/LEDGF. Interacts with RSRC1 (via Arg/Ser-rich domain). Interacts with ZRSR2/U2AF1-RS2. Interacts with CCDC55 (via C-terminus). Interacts with SRPK1 and a sliding docking interaction is essential for its sequential and processive phosphorylation by SRPK1. Interacts with NXF1. Interacts with CCNL1, CCNL2 and CDK11B. Interacts with RRP1B. Interacts (when phosphorylated in its RS domain) with TNPO3; promoting nuclear import. Interacts with ILDR1 (via C-terminus) and ILDR2. Phosphorylated by CLK1, CLK2, CLK3 and CLK4. Phosphorylated by SRPK1 at multiple serines in its RS domain via a directional (C-terminal to N-terminal) and a dual-track mechanism incorporating both processive phosphorylation (in which the kinase stays attached to the substrate after each round of phosphorylation) and distributive phosphorylation steps (in which the kinase and substrate dissociate after each phosphorylation event). The RS domain of SRSF1 binds to a docking groove in the large lobe of the kinase domain of SRPK1 and this induces certain structural changes in SRPK1 and/or RRM 2 domain of SRSF1, allowing RRM 2 to bind the kinase and initiate phosphorylation. The cycles continue for several phosphorylation steps in a processive manner (steps 1-8) until the last few phosphorylation steps (approximately steps 9-12). During that time, a mechanical stress induces the unfolding of the beta-4 motif in RRM 2, which then docks at the docking groove of SRPK1. This also signals RRM 2 to begin to dissociate, which facilitates SRSF1 dissociation after phosphorylation is completed. Post-translationally, asymmetrically dimethylated at arginines, probably by PRMT1, methylation promotes localization to nuclear speckles.

Its subcellular location is the cytoplasm. It localises to the nucleus speckle. Its function is as follows. Plays a role in preventing exon skipping, ensuring the accuracy of splicing and regulating alternative splicing. Interacts with other spliceosomal components, via the RS domains, to form a bridge between the 5'- and 3'-splice site binding components, U1 snRNP and U2AF. Can stimulate binding of U1 snRNP to a 5'-splice site-containing pre-mRNA. Binds to purine-rich RNA sequences, either the octamer, 5'-RGAAGAAC-3' (r=A or G) or the decamers, AGGACAGAGC/AGGACGAAGC. Binds preferentially to the 5'-CGAGGCG-3' motif in vitro. Three copies of the octamer constitute a powerful splicing enhancer in vitro, the ASF/SF2 splicing enhancer (ASE) which can specifically activate ASE-dependent splicing. May function as export adapter involved in mRNA nuclear export through the TAP/NXF1 pathway. This Bos taurus (Bovine) protein is Serine/arginine-rich splicing factor 1 (SRSF1).